Reading from the N-terminus, the 456-residue chain is Multidrug resistance protein NorM (456 aa).

Transmembrane regions (helical) follow at residues 11–31 (LIKL…MGFV), 53–73 (IWLP…PVVA), 92–112 (VVLA…TQFI), 126–146 (TVGY…FQTL), 159–179 (AMVI…IFVY), 189–209 (GVGC…LLLA), 242–262 (FPVA…ALLV), 268–288 (IIVA…MLPM), 314–334 (SRVG…ITVL), 356–376 (LLLF…AAGA), 385–405 (AIFN…GYIL), and 417–437 (AQGF…MLGV).

The protein belongs to the multi antimicrobial extrusion (MATE) (TC 2.A.66.1) family.

Its subcellular location is the cell inner membrane. Functionally, multidrug efflux pump that functions as a Na(+)/drug antiporter. Confers resistance to several drugs, such as norfloxacin, ciprofloxacin, ethidium, kanamycin and streptomycin. The sequence is that of Multidrug resistance protein NorM (norM) from Vibrio parahaemolyticus serotype O3:K6 (strain RIMD 2210633).